We begin with the raw amino-acid sequence, 286 residues long: Pyridoxal kinase PdxY (286 aa).

Substrate contacts are provided by residues Ser-9 and 44 to 45 (TQ). ATP contacts are provided by Asp-111, Glu-148, and Lys-181. Asp-222 contacts substrate.

The protein belongs to the pyridoxine kinase family. PdxY subfamily. Homodimer. It depends on Mg(2+) as a cofactor.

The catalysed reaction is pyridoxal + ATP = pyridoxal 5'-phosphate + ADP + H(+). It participates in cofactor metabolism; pyridoxal 5'-phosphate salvage; pyridoxal 5'-phosphate from pyridoxal: step 1/1. In terms of biological role, pyridoxal kinase involved in the salvage pathway of pyridoxal 5'-phosphate (PLP). Catalyzes the phosphorylation of pyridoxal to PLP. The polypeptide is Pyridoxal kinase PdxY (Pasteurella multocida (strain Pm70)).